A 661-amino-acid polypeptide reads, in one-letter code: Ecdysteroid-phosphate phosphatase (661 aa).

The region spanning K16–H57 is the UBA domain. In terms of domain architecture, SH3 spans A235–E300. The active site involves R409. Residue H410 is the Tele-phosphohistidine intermediate of the active site. The active site involves H590.

As to quaternary structure, homodimer. As to expression, detected in non-diapause eggs, with highest expression between 2 and 5 days after oviposition. Not detected in other tissues tested.

Its subcellular location is the cytoplasm. It is found in the cytosol. It catalyses the reaction ecdysone 22-phosphate + H2O = ecdysone + phosphate. The catalysed reaction is 20-hydroxyecdysone 22-phosphate + H2O = 20-hydroxyecdysone + phosphate. The enzyme catalyses 2-deoxyecdysone 22-phosphate + H2O = 2-deoxyecdysone + phosphate. It carries out the reaction O-phospho-L-tyrosyl-[protein] + H2O = L-tyrosyl-[protein] + phosphate. Its activity is regulated as follows. Competitively inhibited by 4-nitrophenyl phosphate (para-nitrophenylphosphate, pNPP). Also inhibited by tungstate, vanadate, and phosphate. Its function is as follows. Steroid phosphatase which catalyzes the conversion of inactive phosphorylated ecdysteroids into their active forms. Shows high activity towards ecdysone 22-phosphate (E22P). Has lower activity towards other ecdysteriod phosphates including 20-hydroxyecdysone 22-phosphate (20E22P) and 2-deoxyecdysone 22-phosphate (2dE22P). Also has protein tyrosine phosphatase activity. The protein is Ecdysteroid-phosphate phosphatase of Bombyx mori (Silk moth).